Here is a 758-residue protein sequence, read N- to C-terminus: Amyloid beta precursor protein binding family B member 2 (758 aa).

Ser123 is subject to Phosphoserine. A disordered region spans residues 134 to 154 (KLEGKEPHPQDSSSCEILPSQ). Position 160 is a phosphoserine (Ser160). The segment covering 176–190 (EQNRGNHHGTAEEKS) has biased composition (basic and acidic residues). Disordered stretches follow at residues 176–195 (EQNR…PVQG), 206–295 (LLLQ…LPPG), and 326–351 (DLQG…KQPW). 2 stretches are compositionally biased toward polar residues: residues 212–230 (NRPQ…SSSP) and 261–275 (SWTT…PSSP). Residues 290–322 (PDLPPGWKRVSDIAGTYYWHIPTGTTQWERPVS) form the WW domain. The span at 331–340 (RKGSLSSVTP) shows a compositional bias: polar residues. Phosphoserine is present on residues Ser334, Ser409, and Ser412. 2 PID domains span residues 413 to 578 (DPEA…LQVD) and 584 to 736 (TELV…VTTN).

In terms of assembly, interacts (via C-terminus) with APP (via C-terminus). Interacts with APLP2 (via cytoplasmic domain). In terms of tissue distribution, widely expressed.

The protein resides in the endoplasmic reticulum. It is found in the golgi apparatus. It localises to the early endosome. Its function is as follows. Plays a role in the maintenance of lens transparency, and may also play a role in muscle cell strength. Involved in hippocampal neurite branching and neuromuscular junction formation, as a result plays a role in spatial memory functioning. Activates transcription of APP. This Homo sapiens (Human) protein is Amyloid beta precursor protein binding family B member 2.